The chain runs to 61 residues: Large ribosomal subunit protein uL30 (61 aa).

Belongs to the universal ribosomal protein uL30 family. In terms of assembly, part of the 50S ribosomal subunit.

The sequence is that of Large ribosomal subunit protein uL30 from Saccharophagus degradans (strain 2-40 / ATCC 43961 / DSM 17024).